Here is a 696-residue protein sequence, read N- to C-terminus: Macrolide export ATP-binding/permease protein MacB (696 aa).

The 239-residue stretch at 6 to 244 (IELKNIERYH…KPQNKRTFID (239 aa)) folds into the ABC transporter domain. Residue 42 to 49 (GASGSGKS) coordinates ATP. Residues 254–287 (HNTEKLNRPNEKNNIDNDNKENNNGYNRNDNSFL) form a disordered region. Over residues 255–274 (NTEKLNRPNEKNNIDNDNKE) the composition is skewed to basic and acidic residues. The span at 275–284 (NNNGYNRNDN) shows a compositional bias: low complexity. 4 helical membrane passes run 324–344 (FLTMLGIIIGIIAVVFVIALG), 576–596 (IAFISLIVGGIGIMNIMLVSV), 626–646 (MVSLIGGCIGVGCALLFGGLF), and 659–679 (LSSFLIAFLCSSMIGIVFGYF).

Belongs to the ABC transporter superfamily. Macrolide exporter (TC 3.A.1.122) family. As to quaternary structure, homodimer. Part of the tripartite efflux system MacAB-TolC, which is composed of an inner membrane transporter, MacB, a periplasmic membrane fusion protein, MacA, and an outer membrane component, TolC. The complex forms a large protein conduit and can translocate molecules across both the inner and outer membranes. Interacts with MacA.

The protein resides in the cell inner membrane. In terms of biological role, part of the tripartite efflux system MacAB-TolC. MacB is a non-canonical ABC transporter that contains transmembrane domains (TMD), which form a pore in the inner membrane, and an ATP-binding domain (NBD), which is responsible for energy generation. Confers resistance against macrolides. The sequence is that of Macrolide export ATP-binding/permease protein MacB from Haemophilus ducreyi (strain 35000HP / ATCC 700724).